A 377-amino-acid polypeptide reads, in one-letter code: DNA primase small subunit PriS (377 aa).

Active-site residues include aspartate 99, aspartate 101, and aspartate 274.

The protein belongs to the eukaryotic-type primase small subunit family. Heterodimer of a small subunit (PriS) and a large subunit (PriL). The cofactor is Mg(2+). Mn(2+) is required as a cofactor.

Its function is as follows. Catalytic subunit of DNA primase, an RNA polymerase that catalyzes the synthesis of short RNA molecules used as primers for DNA polymerase during DNA replication. The small subunit contains the primase catalytic core and has DNA synthesis activity on its own. Binding to the large subunit stabilizes and modulates the activity, increasing the rate of DNA synthesis while decreasing the length of the DNA fragments, and conferring RNA synthesis capability. The DNA polymerase activity may enable DNA primase to also catalyze primer extension after primer synthesis. May also play a role in DNA repair. The sequence is that of DNA primase small subunit PriS from Staphylothermus marinus (strain ATCC 43588 / DSM 3639 / JCM 9404 / F1).